A 179-amino-acid chain; its full sequence is Large ribosomal subunit protein uL6 (179 aa).

It belongs to the universal ribosomal protein uL6 family. As to quaternary structure, part of the 50S ribosomal subunit.

Functionally, this protein binds to the 23S rRNA, and is important in its secondary structure. It is located near the subunit interface in the base of the L7/L12 stalk, and near the tRNA binding site of the peptidyltransferase center. This is Large ribosomal subunit protein uL6 from Koribacter versatilis (strain Ellin345).